The chain runs to 440 residues: WAS/WASL-interacting protein family member 2 (440 aa).

The segment covering 1-18 has biased composition (pro residues); sequence MPIPPPPPPPPGPPPPPT. Residues 1–38 are disordered; sequence MPIPPPPPPPPGPPPPPTFNQANTEQPKLSRDEQRNRG. The region spanning 36–53 is the WH2 domain; that stretch reads NRGALLQDICKGTKLKKV. Position 37 is an asymmetric dimethylarginine (R37). The tract at residues 49-52 is binds actin; it reads KLKK. Disordered regions lie at residues 56–386 and 419–440; these read VNDR…RDSI and RVYPSKTNRAARGAPPLPPILR. Low complexity predominate over residues 116–132; sequence PSSRAAAPRPPGSAASG. 4 stretches are compositionally biased toward pro residues: residues 176–193, 225–236, 249–262, and 356–378; these read APPPPPPGRRANAPPTPL, PAPPPVKPPPSP, APPPPPYRQPPGVP, and RGKPPPPPSRTPAGPPPPPPPPL.

Belongs to the verprolin family. In terms of assembly, interacts with WASL and WASP, and this interaction results in cytoplasmic relocation of these two proteins along actin filaments. Interacts with NCK2 resulting in the localization to sites of focal adhesions.

It localises to the cytoplasm. The protein resides in the cytoskeleton. Its function is as follows. Plays an active role in the formation of cell surface protrusions downstream of activated PDGFB receptors. Plays an important role in actin-microspike formation through cooperation with WASL. May cooperate with WASP and WASL to induce mobilization and reorganization of the actin filament system. The chain is WAS/WASL-interacting protein family member 2 (Wipf2) from Mus musculus (Mouse).